Reading from the N-terminus, the 95-residue chain is Large ribosomal subunit protein uL23 (95 aa).

The protein belongs to the universal ribosomal protein uL23 family. Part of the 50S ribosomal subunit. Contacts protein L29, and trigger factor when it is bound to the ribosome.

In terms of biological role, one of the early assembly proteins it binds 23S rRNA. One of the proteins that surrounds the polypeptide exit tunnel on the outside of the ribosome. Forms the main docking site for trigger factor binding to the ribosome. The chain is Large ribosomal subunit protein uL23 from Desulforudis audaxviator (strain MP104C).